We begin with the raw amino-acid sequence, 148 residues long: UPF0756 membrane protein NMCC_1816 (148 aa).

4 helical membrane passes run 13-35 (LILL…LLLM), 50-70 (HGLN…LVSG), 80-100 (FLNF…WLAG), and 121-141 (VIGV…AGIL).

Belongs to the UPF0756 family.

The protein resides in the cell membrane. In Neisseria meningitidis serogroup C (strain 053442), this protein is UPF0756 membrane protein NMCC_1816.